The chain runs to 200 residues: Ras-related protein RHN1 (200 aa).

GTP contacts are provided by residues 17 to 25, 36 to 42, 65 to 69, 123 to 126, and 153 to 155; these read GDMGAGKSS, LEFQEST, DTAGQ, NKAD, and SAK. The Effector region signature appears at 39–47; that stretch reads QESTIGAAF. Residues Cys-198 and Cys-199 are each lipidated (S-geranylgeranyl cysteine).

The protein belongs to the small GTPase superfamily. Rab family. High in stem, root, and inflorescence.

It localises to the cell membrane. Its function is as follows. Protein transport. Probably involved in vesicular traffic. This chain is Ras-related protein RHN1 (RHN1), found in Nicotiana plumbaginifolia (Leadwort-leaved tobacco).